We begin with the raw amino-acid sequence, 353 residues long: tRNA N6-adenosine threonylcarbamoyltransferase (353 aa).

Fe cation contacts are provided by histidine 111 and histidine 115. Substrate is bound by residues 134–138 (LVSGG), aspartate 167, glycine 180, aspartate 184, and asparagine 279. Fe cation is bound at residue aspartate 307.

Belongs to the KAE1 / TsaD family. It depends on Fe(2+) as a cofactor.

Its subcellular location is the cytoplasm. It carries out the reaction L-threonylcarbamoyladenylate + adenosine(37) in tRNA = N(6)-L-threonylcarbamoyladenosine(37) in tRNA + AMP + H(+). In terms of biological role, required for the formation of a threonylcarbamoyl group on adenosine at position 37 (t(6)A37) in tRNAs that read codons beginning with adenine. Is involved in the transfer of the threonylcarbamoyl moiety of threonylcarbamoyl-AMP (TC-AMP) to the N6 group of A37, together with TsaE and TsaB. TsaD likely plays a direct catalytic role in this reaction. The chain is tRNA N6-adenosine threonylcarbamoyltransferase from Thermosynechococcus vestitus (strain NIES-2133 / IAM M-273 / BP-1).